The primary structure comprises 159 residues: UPF0587 protein v1g245604 (159 aa).

Zn(2+)-binding residues include cysteine 33, cysteine 36, cysteine 67, and cysteine 70.

Belongs to the UPF0587 family.

In Nematostella vectensis (Starlet sea anemone), this protein is UPF0587 protein v1g245604.